The chain runs to 397 residues: DnaJ homolog subfamily A member 4 (397 aa).

Positions 4-70 (ETQYYDILGV…RDVYDQGGEQ (67 aa)) constitute a J domain. Position 18 is a phosphoserine (serine 18). A CR-type zinc finger spans residues 122–206 (GVTKKLALQK…CSGAKVIREK (85 aa)). Cysteine 135, cysteine 138, cysteine 151, cysteine 154, cysteine 178, cysteine 181, cysteine 194, and cysteine 197 together coordinate Zn(2+). CXXCXGXG motif repeat units follow at residues 135–142 (CEKCEGVG), 151–158 (CPLCKGRG), 178–185 (CIECKGQG), and 194–201 (CESCSGAK). Cysteine methyl ester is present on cysteine 394. Cysteine 394 is lipidated: S-farnesyl cysteine. Residues 395 to 397 (QTA) constitute a propeptide, removed in mature form.

Its subcellular location is the membrane. This chain is DnaJ homolog subfamily A member 4 (DNAJA4), found in Homo sapiens (Human).